The sequence spans 275 residues: MNGESGDAITSRRIVLGVQYDGAPWQGWQTQLNGLTVQDKLEFALYKFTQQTITTACAGRTDAGVHALEQVVHFDTTLERDMQSWVRGVNTFLPSSIAVRWASEVAHDPAENFHARFSARSRTYHYMLYNNPVRSPLLEGKAGWVFRALDIAKMQEAAAHLLGQHDFSAFRSVQCQAKSPVKTMHAIKIERRGDLIMFTVHANAFLHHMVRNIVGSLIYVGNGTQAPSWLKEVLAGQERKFAAPTFMPDGLYLAKIDYDPKWQLPQTEIQNFLWS.

Catalysis depends on Asp62, which acts as the Nucleophile. Position 124 (Tyr124) interacts with substrate.

The protein belongs to the tRNA pseudouridine synthase TruA family. In terms of assembly, homodimer.

It carries out the reaction uridine(38/39/40) in tRNA = pseudouridine(38/39/40) in tRNA. Formation of pseudouridine at positions 38, 39 and 40 in the anticodon stem and loop of transfer RNAs. The sequence is that of tRNA pseudouridine synthase A from Herminiimonas arsenicoxydans.